Reading from the N-terminus, the 114-residue chain is Flagellar hook-basal body complex protein FliE (114 aa).

Belongs to the FliE family.

Its subcellular location is the bacterial flagellum basal body. The polypeptide is Flagellar hook-basal body complex protein FliE (Desulfitobacterium hafniense (strain Y51)).